We begin with the raw amino-acid sequence, 508 residues long: Ell-associated factor Eaf (508 aa).

Composition is skewed to polar residues over residues 140–150 (GQGQLHSQGAN) and 161–190 (GHSTGTAPKMENSTMRISTKTKVSTGSRRN). Disordered regions lie at residues 140-226 (GQGQ…WDAN) and 251-508 (HNSG…DDDE). Serine 200 bears the Phosphoserine mark. Low complexity predominate over residues 251–268 (HNSGHANTSGSSTGSATG). 2 stretches are compositionally biased toward polar residues: residues 272–281 (FGSTSSSSHM) and 296–313 (QQMQQRLSPPMAQQQQPS). A compositionally biased stretch (low complexity) spans 314 to 341 (NYGRGYNGGHNHVQQQQQRNSPQQQRPP). The segment covering 391-406 (DSSDSDSGSDSDDSTE) has biased composition (acidic residues). 3 stretches are compositionally biased toward low complexity: residues 412-444 (QGQQQDHQQQQQQQVYQNHNHQQQQIAQQHLNQ), 461-477 (HQHQQQMAPHQQQQKQQ), and 489-502 (NDLLQNDLQLSSNS).

The protein belongs to the EAF family.

The protein resides in the nucleus. Its function is as follows. Promotes transcriptional elongation by Su(Tpl)/ELL. Essential for development. This chain is Ell-associated factor Eaf, found in Drosophila erecta (Fruit fly).